The following is a 259-amino-acid chain: Imidazole glycerol phosphate synthase subunit HisF (259 aa).

Active-site residues include Asp11 and Asp130.

It belongs to the HisA/HisF family. As to quaternary structure, heterodimer of HisH and HisF.

It localises to the cytoplasm. The catalysed reaction is 5-[(5-phospho-1-deoxy-D-ribulos-1-ylimino)methylamino]-1-(5-phospho-beta-D-ribosyl)imidazole-4-carboxamide + L-glutamine = D-erythro-1-(imidazol-4-yl)glycerol 3-phosphate + 5-amino-1-(5-phospho-beta-D-ribosyl)imidazole-4-carboxamide + L-glutamate + H(+). The protein operates within amino-acid biosynthesis; L-histidine biosynthesis; L-histidine from 5-phospho-alpha-D-ribose 1-diphosphate: step 5/9. IGPS catalyzes the conversion of PRFAR and glutamine to IGP, AICAR and glutamate. The HisF subunit catalyzes the cyclization activity that produces IGP and AICAR from PRFAR using the ammonia provided by the HisH subunit. The protein is Imidazole glycerol phosphate synthase subunit HisF of Variovorax paradoxus (strain S110).